The chain runs to 466 residues: CCA-adding enzyme (466 aa).

Ser55 and Arg58 together coordinate ATP. CTP is bound by residues Ser55 and Arg58. Mg(2+)-binding residues include Asp67, Asp69, and Asp118. Residues His141, Lys161, and Tyr170 each coordinate ATP. His141, Lys161, and Tyr170 together coordinate CTP.

It belongs to the tRNA nucleotidyltransferase/poly(A) polymerase family. Archaeal CCA-adding enzyme subfamily. As to quaternary structure, homodimer. Requires Mg(2+) as cofactor.

The enzyme catalyses a tRNA precursor + 2 CTP + ATP = a tRNA with a 3' CCA end + 3 diphosphate. It catalyses the reaction a tRNA with a 3' CCA end + 2 CTP + ATP = a tRNA with a 3' CCACCA end + 3 diphosphate. In terms of biological role, catalyzes the addition and repair of the essential 3'-terminal CCA sequence in tRNAs without using a nucleic acid template. Adds these three nucleotides in the order of C, C, and A to the tRNA nucleotide-73, using CTP and ATP as substrates and producing inorganic pyrophosphate. tRNA 3'-terminal CCA addition is required both for tRNA processing and repair. Also involved in tRNA surveillance by mediating tandem CCA addition to generate a CCACCA at the 3' terminus of unstable tRNAs. While stable tRNAs receive only 3'-terminal CCA, unstable tRNAs are marked with CCACCA and rapidly degraded. The polypeptide is CCA-adding enzyme (Haloarcula marismortui (strain ATCC 43049 / DSM 3752 / JCM 8966 / VKM B-1809) (Halobacterium marismortui)).